A 271-amino-acid polypeptide reads, in one-letter code: Short-chain dehydrogenase ptmH (271 aa).

Residues isoleucine 8, threonine 34, lysine 40, aspartate 56, asparagine 84, tyrosine 148, lysine 152, valine 181, and threonine 183 each contribute to the NADP(+) site. The Proton acceptor role is filled by tyrosine 148. Lysine 152 (lowers pKa of active site Tyr) is an active-site residue.

This sequence belongs to the short-chain dehydrogenases/reductases (SDR) family.

Its pathway is secondary metabolite biosynthesis. Its function is as follows. Short-chain dehydrogenase; part of the gene cluster that mediates the biosynthesis of the indole diterpenes penitrems. The geranylgeranyl diphosphate (GGPP) synthase ptmG catalyzes the first step in penitrem biosynthesis via conversion of farnesyl pyrophosphate and isopentyl pyrophosphate into geranylgeranyl pyrophosphate (GGPP). Condensation of indole-3-glycerol phosphate with GGPP by the prenyl transferase ptmC then forms 3-geranylgeranylindole (3-GGI). Epoxidation by the FAD-dependent monooxygenase ptmM leads to a epoxidized-GGI that is substrate of the terpene cyclase ptmB for cyclization to yield paspaline. Paspaline is subsequently converted to 13-desoxypaxilline by the cytochrome P450 monooxygenase ptmP, the latter being then converted to paxilline by the cytochrome P450 monooxygenase ptmQ. Paxilline is converted to beta-paxitriol via C-10 ketoreduction by the short-chain dehydrogenase ptmH which can be monoprenylated at the C-20 by the indole diterpene prenyltransferase ptmD. A two-step elimination (acetylation and elimination) process performed by the O-acetyltransferase ptmV and ptmI leads to the production of the prenylated form of penijanthine. The FAD-linked oxidoreductase ptmO then converts the prenylated form of penijanthine into PC-M5 which is in turn transformed into PC-M4 by the aromatic dimethylallyltransferase ptmE. Five sequential oxidative transformations performed by the cytochrome P450 monooxygenases ptmK, ptmU, ptmL, ptmN and ptmJ yield the various penitrem compounds. PtmK, ptmU and ptmM are involved in the formation of the key bicyclic ring of penitrem C via the formation of the intermediates secopenitrem D and penitrem D. PtmL catalyzes the epoxidation of penitrem D and C to yield penitrem B and F, respectively. PtmJ catalyzes the last benzylic hydroxylation to convert penitrem B to prenitrem E and penitrem F to penitrem A. The protein is Short-chain dehydrogenase ptmH of Penicillium ochrochloron.